A 352-amino-acid polypeptide reads, in one-letter code: MTVAIGRSDSERGWFDVLDDWLKRDRFVFLGWSGLLLLPCAYLAVGAWFTGTTFVTSWYTHGLASSYLEGCNFLTAAVSTPANSMGHSILFVWGPEAQGDFTRWCQIGGLWTFTALHGALGLIGFTLRQFEIARLIGLRPYNAIAFSGPIAVFVSVFLLYPLGQAGWFFAPSFGVAAIFRFLLFFQGFHNWTLNPFHMMGVAGVLGAALLCAIHGATVENTLFEDGDGSNTFPAFNPTQAEETYSMVTANRFWSQIFGVAFSNKRWLHFFMLFVPVTGLWMSAIGVVGLGVNLRAYDFVSQEIRAAEDPEFETFYTKNLLLNEGIRAWMAVQDQPHENFVFSEEVLPRGNAL.

The chain crosses the membrane as a helical span at residues 40–60 (CAYLAVGAWFTGTTFVTSWYT). Chlorophyll a is bound at residue His117. The chain crosses the membrane as a helical span at residues 124–140 (GFTLRQFEIARLIGLRP). Pheophytin a contacts are provided by Gln129 and Asn142. The helical transmembrane segment at 152–165 (VFVSVFLLYPLGQA) threads the bilayer. Residue His197 participates in chlorophyll a binding. The helical transmembrane segment at 207-227 (AALLCAIHGATVENTLFEDGD) threads the bilayer. The a plastoquinone site is built by His214 and Phe261. His214 contributes to the Fe cation binding site. His268 is a Fe cation binding site. A helical membrane pass occupies residues 278–294 (GLWMSAIGVVGLGVNLR).

This sequence belongs to the reaction center PufL/M/PsbA/D family. As to quaternary structure, PSII is composed of 1 copy each of membrane proteins PsbA, PsbB, PsbC, PsbD, PsbE, PsbF, PsbH, PsbI, PsbJ, PsbK, PsbL, PsbM, PsbT, PsbX, PsbY, PsbZ, Psb30/Ycf12, at least 3 peripheral proteins of the oxygen-evolving complex and a large number of cofactors. It forms dimeric complexes. Requires The D1/D2 heterodimer binds P680, chlorophylls that are the primary electron donor of PSII, and subsequent electron acceptors. It shares a non-heme iron and each subunit binds pheophytin, quinone, additional chlorophylls, carotenoids and lipids. There is also a Cl(-1) ion associated with D1 and D2, which is required for oxygen evolution. The PSII complex binds additional chlorophylls, carotenoids and specific lipids. as cofactor.

The protein resides in the plastid. Its subcellular location is the cyanelle thylakoid membrane. It carries out the reaction 2 a plastoquinone + 4 hnu + 2 H2O = 2 a plastoquinol + O2. Photosystem II (PSII) is a light-driven water:plastoquinone oxidoreductase that uses light energy to abstract electrons from H(2)O, generating O(2) and a proton gradient subsequently used for ATP formation. It consists of a core antenna complex that captures photons, and an electron transfer chain that converts photonic excitation into a charge separation. The D1/D2 (PsbA/PsbD) reaction center heterodimer binds P680, the primary electron donor of PSII as well as several subsequent electron acceptors. D2 is needed for assembly of a stable PSII complex. The sequence is that of Photosystem II D2 protein from Cyanophora paradoxa.